A 128-amino-acid chain; its full sequence is NADPH-dependent 7-cyano-7-deazaguanine reductase (128 aa).

C34 (thioimide intermediate) is an active-site residue. Residue D41 is the Proton donor of the active site. Substrate is bound by residues 56 to 58 (IEL) and 75 to 76 (HE).

It belongs to the GTP cyclohydrolase I family. QueF type 1 subfamily.

Its subcellular location is the cytoplasm. It catalyses the reaction 7-aminomethyl-7-carbaguanine + 2 NADP(+) = 7-cyano-7-deazaguanine + 2 NADPH + 3 H(+). The protein operates within tRNA modification; tRNA-queuosine biosynthesis. Its function is as follows. Catalyzes the NADPH-dependent reduction of 7-cyano-7-deazaguanine (preQ0) to 7-aminomethyl-7-deazaguanine (preQ1). The protein is NADPH-dependent 7-cyano-7-deazaguanine reductase of Ruthia magnifica subsp. Calyptogena magnifica.